The following is a 62-amino-acid chain: Large ribosomal subunit protein bL28 (62 aa).

Positions 1-28 are disordered; that stretch reads MARVCAITGRKARSGNSRSHAMNATKRK.

This sequence belongs to the bacterial ribosomal protein bL28 family.

The polypeptide is Large ribosomal subunit protein bL28 (Bacillus cytotoxicus (strain DSM 22905 / CIP 110041 / 391-98 / NVH 391-98)).